A 64-amino-acid chain; its full sequence is Small ribosomal subunit protein eS17 (64 aa).

It belongs to the eukaryotic ribosomal protein eS17 family.

The chain is Small ribosomal subunit protein eS17 from Methanosarcina acetivorans (strain ATCC 35395 / DSM 2834 / JCM 12185 / C2A).